The following is a 271-amino-acid chain: Protein FAM110D (271 aa).

Residues methionine 1–arginine 13 are compositionally biased toward polar residues. Disordered regions lie at residues methionine 1–leucine 84, aspartate 118–arginine 149, and proline 186–threonine 242.

It belongs to the FAM110 family.

This Mus musculus (Mouse) protein is Protein FAM110D.